The primary structure comprises 461 residues: Protein DVR-1 homolog (461 aa).

The signal sequence occupies residues 1-30 (MEYSRKTYLDLNIMAKYILILSLFFGPGLS). A propeptide spanning residues 31–338 (WDVFYSGDED…QKKGGKRPRK (308 aa)) is cleaved from the precursor. N-linked (GlcNAc...) asparagine glycosylation is present at asparagine 149. The segment at 317-351 (SHLRRNRRAATRQKKGGKRPRKPDTDNDIASRDSA) is disordered. Residues 318 to 337 (HLRRNRRAATRQKKGGKRPR) show a composition bias toward basic residues. Over residues 338–347 (KPDTDNDIAS) the composition is skewed to basic and acidic residues. 3 disulfide bridges follow: cysteine 360–cysteine 426, cysteine 389–cysteine 458, and cysteine 393–cysteine 460. N-linked (GlcNAc...) asparagine glycosylation occurs at asparagine 402.

Belongs to the TGF-beta family. As to quaternary structure, homodimer; disulfide-linked.

It is found in the secreted. The sequence is that of Protein DVR-1 homolog (DVR1) from Strongylocentrotus purpuratus (Purple sea urchin).